The following is a 503-amino-acid chain: Transmembrane protein 184C (503 aa).

7 helical membrane-spanning segments follow: residues 17-37 (LLILLYALAILVTVPVCIWEF), 48-68 (VWFIAGIFLLLTIPVSMCGIL), 83-103 (IIRILWMVPIYSLDSWVALKY), 115-135 (ECYEAYVIYNFMIFLTNYLTI), 212-232 (YLVILNNLSQLFAMYCLLLFY), 254-274 (VVFVSFWQAVLIALLVKVGVI), and 287-307 (AVATGLQDFIICIEMFFAAIA). 2 disordered regions span residues 358 to 391 (PKKKCFPGDPDHNEHSSLLSASSQDSSKPSSPVG) and 479 to 503 (SPKPSDDIVIDFSDSPEGSDSSTDS). A compositionally biased stretch (low complexity) spans 373–388 (SSLLSASSQDSSKPSS). The segment covering 494 to 503 (PEGSDSSTDS) has biased composition (polar residues).

Belongs to the TMEM184 family.

It localises to the membrane. Possible tumor suppressor which may play a role in cell growth. In Rattus norvegicus (Rat), this protein is Transmembrane protein 184C (Tmem184c).